A 245-amino-acid polypeptide reads, in one-letter code: MTDKYAFSLTTFSPNGKLVQIEYALNAVNAGVTSVGIKATDGVVLATEKKPTSELAIGASLEKVCAITPDIGMVYSGMGPDFRVLVDKSRKVAQTTYKKIYNEYPPTKILVQEIASVMQESTQSGGVRPFGVSLLVAGMDEKGPSLYQVDPSGTYFAWKATAIGKSSTAAKTFLEKRYNDELELDDAVHTAILALKETFEGELTEDNIEIAVVSTKPTDSGIVGVPGGHFCRLSQSEIRDYLDQV.

This sequence belongs to the peptidase T1A family. The 26S proteasome consists of a 20S proteasome core and two 19S regulatory subunits. The 20S proteasome core is composed of 28 subunits that are arranged in four stacked rings, resulting in a barrel-shaped structure. The two end rings are each formed by seven alpha subunits, and the two central rings are each formed by seven beta subunits. The catalytic chamber with the active sites is on the inside of the barrel.

The protein localises to the cytoplasm. Its subcellular location is the nucleus. Its function is as follows. The proteasome is a multicatalytic proteinase complex which is characterized by its ability to cleave peptides with Arg, Phe, Tyr, Leu, and Glu adjacent to the leaving group at neutral or slightly basic pH. The proteasome has an ATP-dependent proteolytic activity. This chain is Probable proteasome subunit alpha type-2 (pre8), found in Schizosaccharomyces pombe (strain 972 / ATCC 24843) (Fission yeast).